Here is a 480-residue protein sequence, read N- to C-terminus: Ribulose bisphosphate carboxylase large chain (480 aa).

Positions 1-2 are excised as a propeptide; sequence MS. Pro-3 is subject to N-acetylproline. At Lys-14 the chain carries N6,N6,N6-trimethyllysine. Substrate is bound by residues Asn-123 and Thr-173. Lys-175 acts as the Proton acceptor in catalysis. Position 177 (Lys-177) interacts with substrate. Mg(2+) is bound by residues Lys-201, Asp-203, and Glu-204. At Lys-201 the chain carries N6-carboxylysine. His-294 (proton acceptor) is an active-site residue. Substrate-binding residues include Arg-295, His-327, and Ser-379.

Belongs to the RuBisCO large chain family. Type I subfamily. In terms of assembly, heterohexadecamer of 8 large chains and 8 small chains; disulfide-linked. The disulfide link is formed within the large subunit homodimers. Mg(2+) is required as a cofactor. Post-translationally, the disulfide bond which can form in the large chain dimeric partners within the hexadecamer appears to be associated with oxidative stress and protein turnover.

Its subcellular location is the plastid. The protein resides in the chloroplast. It carries out the reaction 2 (2R)-3-phosphoglycerate + 2 H(+) = D-ribulose 1,5-bisphosphate + CO2 + H2O. The enzyme catalyses D-ribulose 1,5-bisphosphate + O2 = 2-phosphoglycolate + (2R)-3-phosphoglycerate + 2 H(+). Its function is as follows. RuBisCO catalyzes two reactions: the carboxylation of D-ribulose 1,5-bisphosphate, the primary event in carbon dioxide fixation, as well as the oxidative fragmentation of the pentose substrate in the photorespiration process. Both reactions occur simultaneously and in competition at the same active site. The protein is Ribulose bisphosphate carboxylase large chain of Basella alba (Malabar spinach).